The primary structure comprises 164 residues: FMN reductase (NADH) RutF (164 aa).

This sequence belongs to the non-flavoprotein flavin reductase family. RutF subfamily.

The enzyme catalyses FMNH2 + NAD(+) = FMN + NADH + 2 H(+). Functionally, catalyzes the reduction of FMN to FMNH2 which is used to reduce pyrimidine by RutA via the Rut pathway. The sequence is that of FMN reductase (NADH) RutF from Klebsiella pneumoniae (strain 342).